The sequence spans 401 residues: G2/mitotic-specific cyclin-B1 (401 aa).

Disordered stretches follow at residues 1 to 30 and 84 to 103; these read MALRVTRNRLASTRAEQGGKTCSVSGPTLK and KVQVPAQPEPASPTPMETSG. Polar residues predominate over residues 9–26; that stretch reads RLASTRAEQGGKTCSVSG.

It belongs to the cyclin family. Cyclin AB subfamily. Interacts with the CDK1 protein kinase to form a serine/threonine kinase holoenzyme complex also known as maturation promoting factor (MPF). The cyclin subunit imparts substrate specificity to the complex.

Functionally, essential for the control of the cell cycle at the G2/M (mitosis) transition. The sequence is that of G2/mitotic-specific cyclin-B1 (ccnb1) from Oryzias javanicus (Javanese ricefish).